The sequence spans 251 residues: MVLFLLLVALLSPAGEAGKIIGGHEAKPHSRPYMAFLQFKISGKSYICGGFLVREDFVLTAAHCLGSSINVTLGAHTITDQERTQQVIQVRRAIPHPDYNDETCANDIMLLQLTRKAEMTDAVSLINLPRSLEKVKPGMMCSVAGWGQLGVNMPSADKLQEVDLEVQREEKCIARFKDYIPVTQICAGDPSKRKDSFLGDSGGPLVCDGVAQGIVSYGKDDGTTPNVYTRISSFLSWIQRTMRQYKNQGSA.

A signal peptide spans 1–17; the sequence is MVLFLLLVALLSPAGEA. A propeptide spans 18-19 (activation peptide); sequence GK. Residues 20 to 243 form the Peptidase S1 domain; that stretch reads IIGGHEAKPH…FLSWIQRTMR (224 aa). A disulfide bridge connects residues Cys-48 and Cys-64. His-63 serves as the catalytic Charge relay system. N-linked (GlcNAc...) asparagine glycosylation occurs at Asn-70. Asp-107 (charge relay system) is an active-site residue. Intrachain disulfides connect Cys-141/Cys-207 and Cys-172/Cys-186. Ser-201 serves as the catalytic Charge relay system.

This sequence belongs to the peptidase S1 family. Granzyme subfamily.

It localises to the secreted. Its subcellular location is the cytoplasmic granule. The chain is Mast cell protease 3 from Ovis aries (Sheep).